Here is a 214-residue protein sequence, read N- to C-terminus: Outer-membrane lipoprotein LolB (214 aa).

Residues 1–30 form the signal peptide; it reads MKHVSSPHPCAAIASARVWLGLVLVALLAG. C31 is lipidated: N-palmitoyl cysteine. A lipid anchor (S-diacylglycerol cysteine) is attached at C31.

This sequence belongs to the LolB family. In terms of assembly, monomer.

The protein resides in the cell outer membrane. In terms of biological role, plays a critical role in the incorporation of lipoproteins in the outer membrane after they are released by the LolA protein. The chain is Outer-membrane lipoprotein LolB from Chromohalobacter salexigens (strain ATCC BAA-138 / DSM 3043 / CIP 106854 / NCIMB 13768 / 1H11).